A 340-amino-acid chain; its full sequence is DNA repair protein RAD51 homolog A (340 aa).

The span at 1–14 (MSSAAQQQQKAAAA) shows a compositional bias: low complexity. The disordered stretch occupies residues 1–21 (MSSAAQQQQKAAAAEQEEVEH). In terms of domain architecture, HhH spans 49–78 (TVEAVAYTPRKDLLQIKGISEAKADKIIEA). Residue 128–135 (GEFRSGKT) participates in ATP binding.

It belongs to the RecA family. RAD51 subfamily. Self-associates and may interact with XRCC3 homolog. Highly expressed in mitotic and meiotic tissues, but low levels in differentiated tissues.

The protein resides in the nucleus. Functionally, binds to single and double-stranded DNA and exhibits DNA-dependent ATPase activity. Unwinds duplex DNA. Component of the meiotic recombination pathway. Seems to play a role in mediating chromosome homology search, chromosome pairing and synapsis at early stages and probably chromosome crossing-over at later stages in meiosis. Probably is involved in the repair of meiotic double strand breaks (DBSs) and in homologous recombination. This is DNA repair protein RAD51 homolog A (RAD51A) from Zea mays (Maize).